Reading from the N-terminus, the 453-residue chain is Tubulin delta chain (453 aa).

Position 143–149 (143–149 (AGGTGSG)) interacts with GTP.

It belongs to the tubulin family. In terms of assembly, found in a complex with TEDC1, TEDC2, TUBE1 and TUBD1.

The protein localises to the nucleus. It localises to the cytoplasm. Its subcellular location is the cytoskeleton. The protein resides in the microtubule organizing center. It is found in the centrosome. The protein localises to the centriole. It localises to the cell projection. Its subcellular location is the cilium. Acts as a positive regulator of hedgehog signaling and regulates ciliary function. This is Tubulin delta chain (TUBD1) from Canis lupus familiaris (Dog).